The chain runs to 556 residues: MPKFDVSKSDLERLVGRSFSLEEWEDLVLYAKCELDDVWEENGKVYFKLDSKDTNRPDLWSAEGVARQIRWALGLQSGLPEYEVKESDVVVYVDEKLKNVRPYGVYAIVEGLNLDEDSLSQMIQLQEKVALTFGRRRREVAIGIFDFEKVKPPIYYRAAEKTEKFVPLGFEEELTLEEILEKHEKGIEYGHLIKDKPHYPLLVDSEGNVLSMPPIINSELTGRVTTETKKVFIDVTGWDLKKVMLALNVMVTALAERGGKIRSVKVIYKDFEIVTPDLTPKRFEVELNYIRKLSGLDLKDEEIKELLERMMYSVELEDGKAKLLYPAFRDDIMHARDVLEDVLIAYGYNNIEPEEPKLAVQGRGDPFKDFEDAIRDLMVGFGLQEIMTFNLTNKEVQFKKMNIPEEEIVEIANPVSQRWSALRKWLLPSLMEFLSNNTHEEYPQRIFEVGLATLIDESRETKTISEPKLAVALAGSEYTFTNAKEILDSLMRHLGVEYEIEETEHGSFISGRVGKVLVNGKEVGIIGEIHPQVLENWNIEVPVVAFEIFLRPLYQP.

Positions 278–353 constitute a B5 domain; that stretch reads LTPKRFEVEL…IAYGYNNIEP (76 aa). 4 residues coordinate Mg(2+): aspartate 331, aspartate 337, glutamate 340, and aspartate 341.

This sequence belongs to the phenylalanyl-tRNA synthetase beta subunit family. Type 2 subfamily. Tetramer of two alpha and two beta subunits. Requires Mg(2+) as cofactor.

The protein resides in the cytoplasm. The enzyme catalyses tRNA(Phe) + L-phenylalanine + ATP = L-phenylalanyl-tRNA(Phe) + AMP + diphosphate + H(+). The sequence is that of Phenylalanine--tRNA ligase beta subunit from Pyrococcus abyssi (strain GE5 / Orsay).